The primary structure comprises 221 residues: Probable glutathione S-transferase parC (221 aa).

Residues 4-83 (EEVILLDFWP…YIEEVWKDKA (80 aa)) enclose the GST N-terminal domain. Glutathione-binding positions include S14, K41, I55, and 67-68 (ES). The region spanning 90–214 (DPYDRAQARF…PKVLEFVKVL (125 aa)) is the GST C-terminal domain.

Belongs to the GST superfamily. Phi family. In terms of tissue distribution, abundant in seedlings and roots. It is also found in the shoot tips, flowers and leaves.

It catalyses the reaction RX + glutathione = an S-substituted glutathione + a halide anion + H(+). Functionally, conjugation of reduced glutathione to a wide number of exogenous and endogenous hydrophobic electrophiles. The protein is Probable glutathione S-transferase parC (PARC) of Nicotiana tabacum (Common tobacco).